The chain runs to 226 residues: uncharacterized protein (226 aa).

To L.innocua lin1255, lin1742 and lin2408.

This is an uncharacterized protein from Listeria innocua serovar 6a (strain ATCC BAA-680 / CLIP 11262).